We begin with the raw amino-acid sequence, 171 residues long: MPAFFEGEFWQIANPELWVGVGLILFIAIVIWAKAPAMIAGKLDETAAKIQTDLDEAARIRAEAEALLATIRAEREETERQAIAMLAAAKADVAQMEIEAKAKLEDQIKRRAEMAERKIAQSEAQAQADVKAAAVDLAAQIAEQVLMARLAAGGSDGLVDTAIGQIGAKLQ.

A helical transmembrane segment spans residues 19 to 39 (VGVGLILFIAIVIWAKAPAMI).

This sequence belongs to the ATPase B chain family. In terms of assembly, F-type ATPases have 2 components, F(1) - the catalytic core - and F(0) - the membrane proton channel. F(1) has five subunits: alpha(3), beta(3), gamma(1), delta(1), epsilon(1). F(0) has three main subunits: a(1), b(2) and c(10-14). The alpha and beta chains form an alternating ring which encloses part of the gamma chain. F(1) is attached to F(0) by a central stalk formed by the gamma and epsilon chains, while a peripheral stalk is formed by the delta and b chains.

Its subcellular location is the cell inner membrane. In terms of biological role, f(1)F(0) ATP synthase produces ATP from ADP in the presence of a proton or sodium gradient. F-type ATPases consist of two structural domains, F(1) containing the extramembraneous catalytic core and F(0) containing the membrane proton channel, linked together by a central stalk and a peripheral stalk. During catalysis, ATP synthesis in the catalytic domain of F(1) is coupled via a rotary mechanism of the central stalk subunits to proton translocation. Component of the F(0) channel, it forms part of the peripheral stalk, linking F(1) to F(0). The protein is ATP synthase subunit b of Caulobacter sp. (strain K31).